Here is a 116-residue protein sequence, read N- to C-terminus: Putative pterin-4-alpha-carbinolamine dehydratase (116 aa).

The protein belongs to the pterin-4-alpha-carbinolamine dehydratase family.

The catalysed reaction is (4aS,6R)-4a-hydroxy-L-erythro-5,6,7,8-tetrahydrobiopterin = (6R)-L-erythro-6,7-dihydrobiopterin + H2O. The protein is Putative pterin-4-alpha-carbinolamine dehydratase of Xylella fastidiosa (strain M12).